The sequence spans 444 residues: Trigger factor (444 aa).

A PPIase FKBP-type domain is found at 160–245 (DMQVTFDFEG…VKQVEKPKLP (86 aa)).

The protein belongs to the FKBP-type PPIase family. Tig subfamily.

The protein localises to the cytoplasm. The enzyme catalyses [protein]-peptidylproline (omega=180) = [protein]-peptidylproline (omega=0). Its function is as follows. Involved in protein export. Acts as a chaperone by maintaining the newly synthesized protein in an open conformation. Functions as a peptidyl-prolyl cis-trans isomerase. This Acinetobacter baumannii (strain AB0057) protein is Trigger factor.